Reading from the N-terminus, the 302-residue chain is Polyamine aminopropyltransferase (302 aa).

The PABS domain occupies 4–239 (WTWHLEWQTP…GLWGFIYASD (236 aa)). Gln33 provides a ligand contact to S-methyl-5'-thioadenosine. His64 and Glu88 together coordinate spermidine. S-methyl-5'-thioadenosine contacts are provided by residues Asp108 and 140 to 141 (DG). Asp158 functions as the Proton acceptor in the catalytic mechanism. An S-methyl-5'-thioadenosine-binding site is contributed by Pro167.

This sequence belongs to the spermidine/spermine synthase family. Homodimer or homotetramer.

The protein resides in the cytoplasm. The catalysed reaction is S-adenosyl 3-(methylsulfanyl)propylamine + putrescine = S-methyl-5'-thioadenosine + spermidine + H(+). It functions in the pathway amine and polyamine biosynthesis; spermidine biosynthesis; spermidine from putrescine: step 1/1. Catalyzes the irreversible transfer of a propylamine group from the amino donor S-adenosylmethioninamine (decarboxy-AdoMet) to putrescine (1,4-diaminobutane) to yield spermidine. The sequence is that of Polyamine aminopropyltransferase from Sulfolobus acidocaldarius (strain ATCC 33909 / DSM 639 / JCM 8929 / NBRC 15157 / NCIMB 11770).